The chain runs to 473 residues: ATP synthase subunit beta (473 aa).

153 to 160 (GGAGVGKT) is an ATP binding site.

The protein belongs to the ATPase alpha/beta chains family. In terms of assembly, F-type ATPases have 2 components, CF(1) - the catalytic core - and CF(0) - the membrane proton channel. CF(1) has five subunits: alpha(3), beta(3), gamma(1), delta(1), epsilon(1). CF(0) has three main subunits: a(1), b(2) and c(9-12). The alpha and beta chains form an alternating ring which encloses part of the gamma chain. CF(1) is attached to CF(0) by a central stalk formed by the gamma and epsilon chains, while a peripheral stalk is formed by the delta and b chains.

The protein localises to the cell inner membrane. It carries out the reaction ATP + H2O + 4 H(+)(in) = ADP + phosphate + 5 H(+)(out). Produces ATP from ADP in the presence of a proton gradient across the membrane. The catalytic sites are hosted primarily by the beta subunits. In Rickettsia massiliae (strain Mtu5), this protein is ATP synthase subunit beta.